A 107-amino-acid chain; its full sequence is Ferredoxin-6 (107 aa).

The 2Fe-2S ferredoxin-type domain occupies 2–106; the sequence is AKIIFIEHNG…GLVVHLPEKQ (105 aa). Cys40, Cys46, Cys49, and Cys87 together coordinate [2Fe-2S] cluster.

This sequence belongs to the adrenodoxin/putidaredoxin family. [2Fe-2S] cluster serves as cofactor.

Its function is as follows. Ferredoxins are small electron carrier proteins that participate in various redox reactions. FdVI is an essential protein required for growth of R.capsulatus. May be involved in Fe-S cluster assembly. The sequence is that of Ferredoxin-6 from Rhodobacter capsulatus (Rhodopseudomonas capsulata).